Here is a 517-residue protein sequence, read N- to C-terminus: BTB/POZ domain-containing protein At3g49900 (517 aa).

Low complexity predominate over residues 28-37 (SSSSSSLSLS). The interval 28-49 (SSSSSSLSLSPKQPINLSSSPS) is disordered. Residues 38–49 (PKQPINLSSSPS) are compositionally biased toward polar residues. In terms of domain architecture, BTB spans 67 to 130 (PDVFVNVGGT…CYGAHIELTP (64 aa)). The 84-residue stretch at 224–307 (LPAGDFNVVA…VRAMLQEQLN (84 aa)) folds into the NPH3 domain. The tract at residues 409 to 456 (ARSASFHCVHQPSNVNKTQRGDRGSVSNLSTTYRRRRASPPQAQPQKS) is disordered.

The protein belongs to the NPH3 family.

It functions in the pathway protein modification; protein ubiquitination. Functionally, may act as a substrate-specific adapter of an E3 ubiquitin-protein ligase complex (CUL3-RBX1-BTB) which mediates the ubiquitination and subsequent proteasomal degradation of target proteins. The protein is BTB/POZ domain-containing protein At3g49900 of Arabidopsis thaliana (Mouse-ear cress).